A 278-amino-acid polypeptide reads, in one-letter code: 1-acyl-sn-glycerol-3-phosphate acyltransferase beta (278 aa).

The signal sequence occupies residues 1–23; it reads MELWPCLAAALLLLLLLVQLSRA. At 24–29 the chain is on the lumenal side; that stretch reads AEFYAK. The chain crosses the membrane as a helical span at residues 30–50; the sequence is VALYCALCFTVSAVASLVCLL. The Cytoplasmic segment spans residues 51–121; sequence RHGGRTVENM…PERCVQIAKR (71 aa). The HXXXXD motif motif lies at 98-103; the sequence is HQSILD. Residues 122 to 142 form a helical membrane-spanning segment; it reads ELLFLGPVGLIMYLGGVFFIN. The Lumenal portion of the chain corresponds to 143–278; that stretch reads RQRSSTAMTV…TAGSGVQPAQ (136 aa). Residues 172–175 carry the EGTR motif motif; it reads EGTR.

The protein belongs to the 1-acyl-sn-glycerol-3-phosphate acyltransferase family. As to expression, expressed predominantly in adipose tissue, pancreas and liver.

It is found in the endoplasmic reticulum membrane. The catalysed reaction is a 1-acyl-sn-glycero-3-phosphate + an acyl-CoA = a 1,2-diacyl-sn-glycero-3-phosphate + CoA. It catalyses the reaction 1-(9Z-octadecenoyl)-sn-glycero-3-phosphate + (9Z)-octadecenoyl-CoA = 1,2-di-(9Z-octadecenoyl)-sn-glycero-3-phosphate + CoA. It carries out the reaction 1-(9Z-octadecenoyl)-sn-glycero-3-phosphate + hexadecanoyl-CoA = 1-(9Z)-octadecenoyl-2-hexadecanoyl-sn-glycero-3-phosphate + CoA. The enzyme catalyses heptadecanoyl-CoA + 1-(9Z-octadecenoyl)-sn-glycero-3-phosphate = 1-(9Z)-octadecenoyl-2-heptadecanoyl-sn-glycero-3-phosphate + CoA. The catalysed reaction is 1-(9Z-octadecenoyl)-sn-glycero-3-phosphate + (9Z,12Z)-octadecadienoyl-CoA = 1-(9Z)-octadecenoyl-2-(9Z,12Z)-octadecadienoyl-sn-glycero-3-phosphate + CoA. It catalyses the reaction 1-(9Z-octadecenoyl)-sn-glycero-3-phosphate + tetradecanoyl-CoA = 1-(9Z)-octadecenoyl-2-tetradecanoyl-sn-glycero-3-phosphate + CoA. It carries out the reaction pentadecanoyl-CoA + 1-(9Z-octadecenoyl)-sn-glycero-3-phosphate = 1-(9Z)-octadecenoyl-2-pentadecanoyl-sn-glycero-3-phosphate + CoA. The enzyme catalyses 1-hexadecanoyl-sn-glycero-3-phosphate + (9Z)-octadecenoyl-CoA = 1-hexadecanoyl-2-(9Z-octadecenoyl)-sn-glycero-3-phosphate + CoA. The catalysed reaction is 1-tetradecanoyl-sn-glycerol 3-phosphate + (9Z)-octadecenoyl-CoA = 1-tetradecanoyl-2-(9Z)-octadecenoyl-sn-glycero-3-phosphate + CoA. It catalyses the reaction 1-(9Z,12Z,15Z)-octadecatrienoyl-sn-glycero-3-phosphate + (9Z)-octadecenoyl-CoA = 1-(9Z,12Z,15Z)-octadecatrienoyl-2-(9Z)-octadecenoyl-sn-glycero-3-phosphate + CoA. It carries out the reaction 1-(6Z,9Z,12Z-octadecatrienoyl)-sn-glycero-3-phosphate + (9Z)-octadecenoyl-CoA = (6Z,9Z,12Z)-octadecatrienoyl-2-(9Z)-octadecenoyl-sn-glycero-3-phosphate + CoA. The enzyme catalyses 1-eicosanoyl-sn-glycero-3-phosphate + (9Z)-octadecenoyl-CoA = 1-eicosanoyl-2-(9Z)-octadecenoyl-sn-glycero-3-phosphate + CoA. The catalysed reaction is 1-hexadecanoyl-sn-glycero-3-phosphate + octadecanoyl-CoA = 1-hexadecanoyl-2-octadecanoyl-sn-glycero-3-phosphate + CoA. It catalyses the reaction 1-hexadecanoyl-sn-glycero-3-phosphate + (5Z,8Z,11Z,14Z)-eicosatetraenoyl-CoA = 1-hexadecanoyl-2-(5Z,8Z,11Z,14Z-eicosatetraenoyl)-sn-glycero-3-phosphate + CoA. It carries out the reaction 1-hexadecanoyl-sn-glycero-3-phosphate + hexadecanoyl-CoA = 1,2-dihexadecanoyl-sn-glycero-3-phosphate + CoA. The enzyme catalyses 1-hexadecanoyl-sn-glycero-3-phosphate + tetradecanoyl-CoA = 1-hexadecanoyl-2-tetradecanoyl-sn-glycero-3-phosphate + CoA. The catalysed reaction is (11Z)-octadecenoyl-CoA + 1-(9Z-octadecenoyl)-sn-glycero-3-phosphate = 1-(9Z)-octadecenoyl-2-(11Z)-octadecenoyl-sn-glycero-3-phosphate + CoA. It functions in the pathway phospholipid metabolism; CDP-diacylglycerol biosynthesis; CDP-diacylglycerol from sn-glycerol 3-phosphate: step 2/3. In terms of biological role, converts 1-acyl-sn-glycerol-3-phosphate (lysophosphatidic acid or LPA) into 1,2-diacyl-sn-glycerol-3-phosphate (phosphatidic acid or PA) by incorporating an acyl moiety at the sn-2 position of the glycerol backbone. The protein is 1-acyl-sn-glycerol-3-phosphate acyltransferase beta (AGPAT2) of Homo sapiens (Human).